Here is a 207-residue protein sequence, read N- to C-terminus: Guanylate kinase (207 aa).

The region spanning 10-187 (GFFIVLSAAS…AVERLQVIYQ (178 aa)) is the Guanylate kinase-like domain. 17 to 24 (AASGTGKT) contacts ATP.

This sequence belongs to the guanylate kinase family.

The protein localises to the cytoplasm. The enzyme catalyses GMP + ATP = GDP + ADP. Its function is as follows. Essential for recycling GMP and indirectly, cGMP. The protein is Guanylate kinase of Syntrophus aciditrophicus (strain SB).